A 202-amino-acid chain; its full sequence is Translation initiation factor IF-3 (202 aa).

Belongs to the IF-3 family. As to quaternary structure, monomer.

It is found in the cytoplasm. In terms of biological role, IF-3 binds to the 30S ribosomal subunit and shifts the equilibrium between 70S ribosomes and their 50S and 30S subunits in favor of the free subunits, thus enhancing the availability of 30S subunits on which protein synthesis initiation begins. This is Translation initiation factor IF-3 from Prochlorococcus marinus (strain NATL2A).